Here is a 178-residue protein sequence, read N- to C-terminus: MALQIAQNNRDGQQLVGADQGKVEVYVLFANTTYRTLDLYWVCERERENMYLTLKPFEEVRVNTFTTHSWLFRDYYTGERMHVRSQRIFQPIRVRVPKSQQSPDQLVDVRSEVLIHFPMRSLRENCLWLVARWLIRTSNAPRRIIHGYHIPSTLKQQLLSLLTCIESYSRVAGTRRRR.

The protein belongs to the VHL family. In terms of assembly, part of a complex with Cul2, Roc1a/Rbx1 and the elongin BC complex. Interacts with sima/Hif1a. Interacts with itself. Interacts with mgr and betaTub56D/tubulin beta-1 chain. Interacts with tubulin alpha-beta heterodimers by itself or in complex with mgr. Interacts with microtubules (MTs).

It functions in the pathway protein modification; protein ubiquitination. Functionally, involved in development of tracheal vasculature. Probably involved in halting cell migration at the end of vascular tube outgrowth. Possesses E3 ubiquitin ligase activity when in complex with Elongin BC complex, Cul2 and Rox1a/Rbx1, and can target sima/Hif1a for ubiquitination. May play a critical role in promoting microtubule stabilization when tubulins are correctly folded by the prefoldin complex. If tubulin is incorrectly folded, may promote its degradation. The chain is Protein Vhl from Drosophila melanogaster (Fruit fly).